The sequence spans 499 residues: Lysine--tRNA ligase (499 aa).

Mg(2+)-binding residues include E408 and E415.

This sequence belongs to the class-II aminoacyl-tRNA synthetase family. As to quaternary structure, homodimer. Requires Mg(2+) as cofactor.

The protein resides in the cytoplasm. It carries out the reaction tRNA(Lys) + L-lysine + ATP = L-lysyl-tRNA(Lys) + AMP + diphosphate. This Bacillus cytotoxicus (strain DSM 22905 / CIP 110041 / 391-98 / NVH 391-98) protein is Lysine--tRNA ligase.